The primary structure comprises 402 residues: UPF0261 protein BPP1817 (402 aa).

Belongs to the UPF0261 family.

In Bordetella parapertussis (strain 12822 / ATCC BAA-587 / NCTC 13253), this protein is UPF0261 protein BPP1817.